The following is a 950-amino-acid chain: 2-oxoglutarate dehydrogenase E1 component (950 aa).

This sequence belongs to the alpha-ketoglutarate dehydrogenase family. Homodimer. Part of the 2-oxoglutarate dehydrogenase (OGDH) complex composed of E1 (2-oxoglutarate dehydrogenase), E2 (dihydrolipoamide succinyltransferase) and E3 (dihydrolipoamide dehydrogenase); the complex contains multiple copies of the three enzymatic components (E1, E2 and E3). Thiamine diphosphate is required as a cofactor.

The enzyme catalyses N(6)-[(R)-lipoyl]-L-lysyl-[protein] + 2-oxoglutarate + H(+) = N(6)-[(R)-S(8)-succinyldihydrolipoyl]-L-lysyl-[protein] + CO2. In terms of biological role, E1 component of the 2-oxoglutarate dehydrogenase (OGDH) complex which catalyzes the decarboxylation of 2-oxoglutarate, the first step in the conversion of 2-oxoglutarate to succinyl-CoA and CO(2). This is 2-oxoglutarate dehydrogenase E1 component from Geobacillus kaustophilus (strain HTA426).